Reading from the N-terminus, the 230-residue chain is Ribose-5-phosphate isomerase A (230 aa).

Residues 31–34 (TGST), 87–90 (DGAD), and 100–103 (KGGG) contribute to the substrate site. Glu-109 serves as the catalytic Proton acceptor. Lys-127 contacts substrate.

Belongs to the ribose 5-phosphate isomerase family. As to quaternary structure, homodimer.

The catalysed reaction is aldehydo-D-ribose 5-phosphate = D-ribulose 5-phosphate. Its pathway is carbohydrate degradation; pentose phosphate pathway; D-ribose 5-phosphate from D-ribulose 5-phosphate (non-oxidative stage): step 1/1. Catalyzes the reversible conversion of ribose-5-phosphate to ribulose 5-phosphate. This Lactobacillus delbrueckii subsp. bulgaricus (strain ATCC 11842 / DSM 20081 / BCRC 10696 / JCM 1002 / NBRC 13953 / NCIMB 11778 / NCTC 12712 / WDCM 00102 / Lb 14) protein is Ribose-5-phosphate isomerase A.